A 491-amino-acid polypeptide reads, in one-letter code: GTPase Der (491 aa).

EngA-type G domains follow at residues 3–166 (PVVA…AEAM) and 200–373 (IKLA…DSAT). GTP-binding positions include 9–16 (GRPNVGKS), 56–60 (DTGGI), 118–121 (NKVD), 206–213 (GKPNVGKS), 253–257 (DTAGV), and 318–321 (NKWD). A KH-like domain is found at 374–458 (RRVSTSMLTR…PIQIRFQEGD (85 aa)). Residues 472–491 (QERRRKRALSHINDRKTKGE) form a disordered region.

The protein belongs to the TRAFAC class TrmE-Era-EngA-EngB-Septin-like GTPase superfamily. EngA (Der) GTPase family. Associates with the 50S ribosomal subunit.

Its function is as follows. GTPase that plays an essential role in the late steps of ribosome biogenesis. This Shewanella denitrificans (strain OS217 / ATCC BAA-1090 / DSM 15013) protein is GTPase Der.